A 261-amino-acid chain; its full sequence is Class II histocompatibility antigen, M beta 1 chain (261 aa).

Positions 1-18 (MAALWLLLLVLSLHCMGA) are cleaved as a signal peptide. The beta-1 stretch occupies residues 19-112 (GGFVAHVEST…PFWNALTHRT (94 aa)). The Lumenal portion of the chain corresponds to 19–218 (GGFVAHVEST…PGLSPIQTVK (200 aa)). Intrachain disulfides connect Cys-29–Cys-97, Cys-43–Cys-53, and Cys-135–Cys-192. An N-linked (GlcNAc...) asparagine glycan is attached at Asn-75. Residues 113 to 207 (RPPSVRVAQT…GTSEPIRGDW (95 aa)) are beta-2. Residues 114-204 (PPSVRVAQTT…QHSGTSEPIR (91 aa)) enclose the Ig-like C1-type domain. The connecting peptide stretch occupies residues 208–218 (TPGLSPIQTVK). The chain crosses the membrane as a helical span at residues 219 to 239 (VSVSAATLGLGFIIFCVGFFR). Residues 240 to 261 (WRKSHSSSYTPLSGSTYPEGRH) are Cytoplasmic-facing. The short motif at 248 to 251 (YTPL) is the YXXZ motif element.

Belongs to the MHC class II family. In terms of assembly, heterodimer of an alpha chain (DMA) and a beta chain (DMB). Interacts with MHCII; this interaction mediates rapid selection of high-affinity peptides.

The protein resides in the late endosome membrane. It is found in the lysosome membrane. Its function is as follows. Plays a critical role in catalyzing the release of class II-associated invariant chain peptide (CLIP) from newly synthesized MHC class II molecules and freeing the peptide binding site for acquisition of antigenic peptides. The chain is Class II histocompatibility antigen, M beta 1 chain (H2-DMb1) from Mus musculus (Mouse).